The following is a 186-amino-acid chain: Ribosome-recycling factor (186 aa).

This sequence belongs to the RRF family.

The protein resides in the cytoplasm. Its function is as follows. Responsible for the release of ribosomes from messenger RNA at the termination of protein biosynthesis. May increase the efficiency of translation by recycling ribosomes from one round of translation to another. The sequence is that of Ribosome-recycling factor from Chlorobium chlorochromatii (strain CaD3).